A 464-amino-acid polypeptide reads, in one-letter code: Argininosuccinate lyase (464 aa).

It belongs to the lyase 1 family. Argininosuccinate lyase subfamily.

It is found in the cytoplasm. It carries out the reaction 2-(N(omega)-L-arginino)succinate = fumarate + L-arginine. It participates in amino-acid biosynthesis; L-arginine biosynthesis; L-arginine from L-ornithine and carbamoyl phosphate: step 3/3. In Pseudomonas aeruginosa (strain ATCC 15692 / DSM 22644 / CIP 104116 / JCM 14847 / LMG 12228 / 1C / PRS 101 / PAO1), this protein is Argininosuccinate lyase.